Reading from the N-terminus, the 275-residue chain is Gene 18 protein (275 aa).

This sequence belongs to the herpesviridae UL79 family.

The chain is Gene 18 protein (18) from Connochaetes taurinus (Blue wildebeest).